The chain runs to 329 residues: Ankyrin repeat and SOCS box protein 5 (329 aa).

ANK repeat units follow at residues 69–98, 102–131, 135–164, 167–196, 200–229, and 232–261; these read ADRS…NVNA, DHVT…NVNA, DGVT…KPQL, CLPS…DVDQ, HLGT…DVQK, and YWDT…DINA. The SOCS box domain maps to 278 to 329; it reads LVERLLLQHEATPSSLCQLCRLCIRNYIGRPRLHLIPQLQLPTLLQNFLQYR.

Belongs to the ankyrin SOCS box (ASB) family.

It participates in protein modification; protein ubiquitination. May be a substrate-recognition component of a SCF-like ECS (Elongin-Cullin-SOCS-box protein) E3 ubiquitin-protein ligase complex which mediates the ubiquitination and subsequent proteasomal degradation of target proteins. May play a role in the initiation of arteriogenesis. In Bos taurus (Bovine), this protein is Ankyrin repeat and SOCS box protein 5 (ASB5).